Here is a 435-residue protein sequence, read N- to C-terminus: Adenylosuccinate synthetase (435 aa).

GTP-binding positions include 11 to 17 and 39 to 41; these read GDEGKGK and GHT. Asp-12 functions as the Proton acceptor in the catalytic mechanism. Mg(2+) is bound by residues Asp-12 and Gly-39. Residues 12–15, 37–40, Thr-128, Arg-142, Gln-223, Thr-238, and Arg-302 each bind IMP; these read DEGK and NAGH. His-40 (proton donor) is an active-site residue. Residue 298–304 coordinates substrate; the sequence is SVTGRPR. Residues Arg-304, 330 to 332, and 412 to 414 contribute to the GTP site; these read KLD and STG.

This sequence belongs to the adenylosuccinate synthetase family. In terms of assembly, homodimer. Mg(2+) serves as cofactor.

The protein resides in the cytoplasm. The enzyme catalyses IMP + L-aspartate + GTP = N(6)-(1,2-dicarboxyethyl)-AMP + GDP + phosphate + 2 H(+). It functions in the pathway purine metabolism; AMP biosynthesis via de novo pathway; AMP from IMP: step 1/2. Plays an important role in the de novo pathway of purine nucleotide biosynthesis. Catalyzes the first committed step in the biosynthesis of AMP from IMP. This chain is Adenylosuccinate synthetase, found in Coxiella burnetii (strain RSA 493 / Nine Mile phase I).